A 412-amino-acid chain; its full sequence is NAD-dependent dihydropyrimidine dehydrogenase subunit PreT (412 aa).

Glu286 contributes to the NAD(+) binding site.

Belongs to the NADH dehydrogenase family. In terms of assembly, heterotetramer of 2 PreA and 2 PreT subunits.

It catalyses the reaction 5,6-dihydrouracil + NAD(+) = uracil + NADH + H(+). The enzyme catalyses 5,6-dihydrothymine + NAD(+) = thymine + NADH + H(+). In terms of biological role, involved in pyrimidine base degradation. Catalyzes physiologically the reduction of uracil to 5,6-dihydrouracil (DHU) by using NADH as a specific cosubstrate. It also catalyzes the reverse reaction and the reduction of thymine to 5,6-dihydrothymine (DHT). This chain is NAD-dependent dihydropyrimidine dehydrogenase subunit PreT (preT), found in Escherichia coli (strain K12).